The following is a 185-amino-acid chain: Elongation factor P (185 aa).

Belongs to the elongation factor P family.

It is found in the cytoplasm. The protein operates within protein biosynthesis; polypeptide chain elongation. Its function is as follows. Involved in peptide bond synthesis. Stimulates efficient translation and peptide-bond synthesis on native or reconstituted 70S ribosomes in vitro. Probably functions indirectly by altering the affinity of the ribosome for aminoacyl-tRNA, thus increasing their reactivity as acceptors for peptidyl transferase. This Bacillus pumilus (strain SAFR-032) protein is Elongation factor P.